The chain runs to 370 residues: Immunoglobulin superfamily member 5 (370 aa).

The signal sequence occupies residues methionine 1–serine 24. 2 Ig-like V-type domains span residues tyrosine 25 to glutamine 125 and glycine 128 to threonine 215. At tyrosine 25 to alanine 239 the chain is on the extracellular side. 2 N-linked (GlcNAc...) asparagine glycosylation sites follow: asparagine 33 and asparagine 45. A disulfide bridge connects residues cysteine 46 and cysteine 109. 3 N-linked (GlcNAc...) asparagine glycosylation sites follow: asparagine 146, asparagine 196, and asparagine 217. The cysteines at positions 149 and 201 are disulfide-linked. A helical membrane pass occupies residues isoleucine 240–isoleucine 260. At phenylalanine 261–valine 370 the chain is on the cytoplasmic side. A disordered region spans residues alanine 284–alanine 359. The span at asparagine 289–lysine 301 shows a compositional bias: basic and acidic residues.

Belongs to the immunoglobulin superfamily. As to quaternary structure, interacts with MAGI1 at tight junctions, forms a tripartite complex with NPHS1. Interacts with LNX1 isoform 2 via its PDZ 2 domain, it may also interact with other isoforms containing this domain. Post-translationally, N-glycosylated. In terms of tissue distribution, localized to kidney glomeruli and small intestinal epithelial cells. In kidney glomeruli, it is localized at slit diaphragm. Also found in spermatogonia, gonocytes, hematopoietic stem cells and Sertoli cells.

It localises to the apical cell membrane. Its subcellular location is the cell junction. The protein localises to the tight junction. Functionally, provides, together with MAGI1, an adhesion machinery at tight junctions, which may regulate the permeability of kidney glomerulus and small intestinal epithelial cells. Mediates calcium-independent homophilic cell adhesion. In testis, it may function as a cell adhesion molecule rather than a tight-junction protein. It may participate in the adhesion between spermatogonia-spermatogonia, spermatogonia-Sertoli cells, and Sertoli cells-Sertoli cells. The chain is Immunoglobulin superfamily member 5 (Igsf5) from Mus musculus (Mouse).